The sequence spans 436 residues: Trigger factor (436 aa).

Positions 163-248 (GDRVTIDFEG…VKKIEAAHLP (86 aa)) constitute a PPIase FKBP-type domain.

Belongs to the FKBP-type PPIase family. Tig subfamily.

It localises to the cytoplasm. The catalysed reaction is [protein]-peptidylproline (omega=180) = [protein]-peptidylproline (omega=0). Its function is as follows. Involved in protein export. Acts as a chaperone by maintaining the newly synthesized protein in an open conformation. Functions as a peptidyl-prolyl cis-trans isomerase. In Polaromonas naphthalenivorans (strain CJ2), this protein is Trigger factor.